The primary structure comprises 72 residues: Translation initiation factor IF-1 (72 aa).

An S1-like domain is found at 1–72; the sequence is MAKEDSIEMQ…SKGRIVFRSR (72 aa).

Belongs to the IF-1 family. Component of the 30S ribosomal translation pre-initiation complex which assembles on the 30S ribosome in the order IF-2 and IF-3, IF-1 and N-formylmethionyl-tRNA(fMet); mRNA recruitment can occur at any time during PIC assembly.

Its subcellular location is the cytoplasm. In terms of biological role, one of the essential components for the initiation of protein synthesis. Stabilizes the binding of IF-2 and IF-3 on the 30S subunit to which N-formylmethionyl-tRNA(fMet) subsequently binds. Helps modulate mRNA selection, yielding the 30S pre-initiation complex (PIC). Upon addition of the 50S ribosomal subunit IF-1, IF-2 and IF-3 are released leaving the mature 70S translation initiation complex. The chain is Translation initiation factor IF-1 from Aeromonas hydrophila subsp. hydrophila (strain ATCC 7966 / DSM 30187 / BCRC 13018 / CCUG 14551 / JCM 1027 / KCTC 2358 / NCIMB 9240 / NCTC 8049).